The primary structure comprises 314 residues: Acetyl-coenzyme A carboxylase carboxyl transferase subunit alpha (314 aa).

In terms of domain architecture, CoA carboxyltransferase C-terminal spans 32–289; that stretch reads EIDMLEASLE…KSAFVEQLDS (258 aa).

It belongs to the AccA family. In terms of assembly, acetyl-CoA carboxylase is a heterohexamer composed of biotin carboxyl carrier protein (AccB), biotin carboxylase (AccC) and two subunits each of ACCase subunit alpha (AccA) and ACCase subunit beta (AccD).

Its subcellular location is the cytoplasm. It carries out the reaction N(6)-carboxybiotinyl-L-lysyl-[protein] + acetyl-CoA = N(6)-biotinyl-L-lysyl-[protein] + malonyl-CoA. It functions in the pathway lipid metabolism; malonyl-CoA biosynthesis; malonyl-CoA from acetyl-CoA: step 1/1. Component of the acetyl coenzyme A carboxylase (ACC) complex. First, biotin carboxylase catalyzes the carboxylation of biotin on its carrier protein (BCCP) and then the CO(2) group is transferred by the carboxyltransferase to acetyl-CoA to form malonyl-CoA. The protein is Acetyl-coenzyme A carboxylase carboxyl transferase subunit alpha of Staphylococcus aureus (strain bovine RF122 / ET3-1).